We begin with the raw amino-acid sequence, 573 residues long: Membrane protein insertase YidC (573 aa).

The helical transmembrane segment at 6 to 26 threads the bilayer; the sequence is VFLIFAWLMVAALLWMEWGKD. A disordered region spans residues 63 to 82; sequence PQAGSPAAVPATSTTTATPA. 5 helical membrane passes run 355-375, 379-399, 446-466, 488-508, and 524-544; these read FSIMAIIGQGLFWVLSHLHSF, WGWAIIGLVVLLRLALYPLSA, GGCLPLLIQMPIFFALYWVLV, PYFILPVLNIAIMWATQKLTP, and PLVFGVMMAFMPAGLVLYWVV.

The protein belongs to the OXA1/ALB3/YidC family. Type 1 subfamily. As to quaternary structure, interacts with the Sec translocase complex via SecD. Specifically interacts with transmembrane segments of nascent integral membrane proteins during membrane integration.

Its subcellular location is the cell inner membrane. Its function is as follows. Required for the insertion and/or proper folding and/or complex formation of integral membrane proteins into the membrane. Involved in integration of membrane proteins that insert both dependently and independently of the Sec translocase complex, as well as at least some lipoproteins. Aids folding of multispanning membrane proteins. This Xanthomonas campestris pv. campestris (strain 8004) protein is Membrane protein insertase YidC.